The following is a 681-amino-acid chain: Envelope glycoprotein (681 aa).

An N-terminal signal peptide occupies residues 1–18 (MKTIYFLISLILIQSIKT). Topologically, residues 19–648 (LPVLEIASNS…GLGGKWWTSD (630 aa)) are extracellular. Residues 38 to 188 (SGTLQKTEDV…FSRQGQGYRH (151 aa)) are receptor-binding. 7 N-linked (GlcNAc...) asparagine; by host glycosylation sites follow: Asn-94, Asn-171, Asn-190, Asn-202, Asn-207, Asn-219, and Asn-223. Positions 223-428 (NQTCPPSLKP…PDSSPTTRPP (206 aa)) are disordered. 2 stretches are compositionally biased toward polar residues: residues 236–260 (PTVT…MNPS) and 278–315 (PHTT…TNPS). The tract at residues 277–455 (GPHTTLNVVT…PFLDGLINTE (179 aa)) is mucin-like region. Residues Asn-310, Asn-323, Asn-336, Asn-350, Asn-360, Asn-364, Asn-381, Asn-397, Asn-475, and Asn-487 are each glycosylated (N-linked (GlcNAc...) asparagine; by host). Positions 327 to 347 (PTTQPATLLNNTNTTPTYNTL) are enriched in low complexity. Polar residues-rich tracts occupy residues 348-365 (KYNL…TNND) and 373-394 (SEQT…TTGQ). Residues 395 to 428 (DTNSTTNIIMTTSDITSKHPTNSSPDSSPTTRPP) are compositionally biased toward low complexity. The tract at residues 529–549 (GLSWIPFFGPGIEGLYTAGLI) is fusion peptide. N-linked (GlcNAc...) asparagine; by host glycans are attached at residues Asn-564 and Asn-619. Residues 649–669 (WGVLTNLGILLLLSIAVLIAL) form a helical membrane-spanning segment. Residues 670–681 (SCICRIFTKYIG) lie on the Cytoplasmic side of the membrane. 2 S-palmitoyl cysteine; by host lipidation sites follow: Cys-671 and Cys-673.

The protein belongs to the filoviruses glycoprotein family. Homotrimer; each monomer consists of a GP1 and a GP2 subunit linked by disulfide bonds. The resulting peplomers (GP1,2) protrude from the virus surface as spikes. GP1,2 interacts with human CD209 and CLEC4M (collectively referred to as DC-SIGN(R)). Asialoglycoprotein receptor (ASGP-R) may be a liver-specific receptor for GP1,2. Members of the Tyro3 receptor tyrosine kinase family may be cell entry factors interacting with GP1,2. N-glycosylated. In terms of processing, O-glycosylated in the mucin-like region. Post-translationally, specific enzymatic cleavages in vivo yield mature proteins. The precursor is processed into GP1 and GP2 by host cell furin in the trans Golgi, and maybe by other host proteases, to yield the mature GP1 and GP2 proteins. The cleavage site corresponds to the furin optimal cleavage sequence [KR]-X-[KR]-R. GP1 is phosphorylated on serine residues between residues 260 and 273.

The protein localises to the virion membrane. It is found in the host cell membrane. Its function is as follows. GP1 is responsible for binding to the receptor(s) on target cells. Interacts with CD209/DC-SIGN and CLEC4M/DC-SIGNR which act as cofactors for virus entry into the host cell. Binding to CD209 and CLEC4M, which are respectively found on dendritic cells (DCs), and on endothelial cells of liver sinusoids and lymph node sinuses, facilitate infection of macrophages and endothelial cells. These interactions not only facilitate virus cell entry, but also allow capture of viral particles by DCs and subsequent transmission to susceptible cells without DCs infection (trans infection). GP2 acts as a class I viral fusion protein. Under the current model, the protein has at least 3 conformational states: pre-fusion native state, pre-hairpin intermediate state, and post-fusion hairpin state. During viral and target cell membrane fusion, the coiled coil regions (heptad repeats) assume a trimer-of-hairpins structure, positioning the fusion peptide in close proximity to the C-terminal region of the ectodomain. The formation of this structure appears to drive apposition and subsequent fusion of viral and target cell membranes. Responsible for penetration of the virus into the cell cytoplasm by mediating the fusion of the membrane of the endocytosed virus particle with the endosomal membrane. Low pH in endosomes induces an irreversible conformational change in GP2, releasing the fusion hydrophobic peptide. This is Envelope glycoprotein (GP) from Chlorocebus aethiops (Green monkey).